The sequence spans 284 residues: Phosphatidylglycerol--prolipoprotein diacylglyceryl transferase (284 aa).

A run of 7 helical transmembrane segments spans residues 14–34 (IAFS…ACAI), 62–82 (YFLW…ILIY), 106–126 (FVGI…IASY), 136–156 (LLIY…FGRI), 190–210 (PSQL…VLWA), 218–238 (GLLI…AEFY), and 252–272 (LSMG…ILLY). Residue arginine 155 coordinates a 1,2-diacyl-sn-glycero-3-phospho-(1'-sn-glycerol).

It belongs to the Lgt family.

The protein resides in the cell inner membrane. The catalysed reaction is L-cysteinyl-[prolipoprotein] + a 1,2-diacyl-sn-glycero-3-phospho-(1'-sn-glycerol) = an S-1,2-diacyl-sn-glyceryl-L-cysteinyl-[prolipoprotein] + sn-glycerol 1-phosphate + H(+). It participates in protein modification; lipoprotein biosynthesis (diacylglyceryl transfer). Its function is as follows. Catalyzes the transfer of the diacylglyceryl group from phosphatidylglycerol to the sulfhydryl group of the N-terminal cysteine of a prolipoprotein, the first step in the formation of mature lipoproteins. The chain is Phosphatidylglycerol--prolipoprotein diacylglyceryl transferase from Helicobacter pylori (strain Shi470).